The sequence spans 88 residues: Small ribosomal subunit protein uS15 (88 aa).

It belongs to the universal ribosomal protein uS15 family. As to quaternary structure, part of the 30S ribosomal subunit. Forms a bridge to the 50S subunit in the 70S ribosome, contacting the 23S rRNA.

Functionally, one of the primary rRNA binding proteins, it binds directly to 16S rRNA where it helps nucleate assembly of the platform of the 30S subunit by binding and bridging several RNA helices of the 16S rRNA. Forms an intersubunit bridge (bridge B4) with the 23S rRNA of the 50S subunit in the ribosome. This Caldicellulosiruptor saccharolyticus (strain ATCC 43494 / DSM 8903 / Tp8T 6331) protein is Small ribosomal subunit protein uS15.